A 377-amino-acid chain; its full sequence is Endolytic peptidoglycan transglycosylase RlpA (377 aa).

A signal peptide spans 1–19 (MHKQLPVICVAAGIVLLAA). A lipid anchor (N-palmitoyl cysteine) is attached at Cys-20. Residue Cys-20 is the site of S-diacylglycerol cysteine attachment. Residues 196-277 (LPPRPDLSGG…PVSAPVTAPA (82 aa)) are disordered. Low complexity-rich tracts occupy residues 208–218 (SASSAPAQPQG) and 264–277 (PQTAPVSAPVTAPA). The SPOR domain maps to 300-376 (AAASGRFVVQ…AQLQSFIASA (77 aa)).

It belongs to the RlpA family.

It localises to the cell membrane. Lytic transglycosylase with a strong preference for naked glycan strands that lack stem peptides. The polypeptide is Endolytic peptidoglycan transglycosylase RlpA (Salmonella typhi).